The primary structure comprises 185 residues: Ribosome-recycling factor (185 aa).

The protein belongs to the RRF family.

The protein resides in the cytoplasm. Its function is as follows. Responsible for the release of ribosomes from messenger RNA at the termination of protein biosynthesis. May increase the efficiency of translation by recycling ribosomes from one round of translation to another. The polypeptide is Ribosome-recycling factor (Alcanivorax borkumensis (strain ATCC 700651 / DSM 11573 / NCIMB 13689 / SK2)).